The sequence spans 183 residues: Large ribosomal subunit protein uL6 (183 aa).

It belongs to the universal ribosomal protein uL6 family. In terms of assembly, part of the 50S ribosomal subunit.

In terms of biological role, this protein binds to the 23S rRNA, and is important in its secondary structure. It is located near the subunit interface in the base of the L7/L12 stalk, and near the tRNA binding site of the peptidyltransferase center. The protein is Large ribosomal subunit protein uL6 of Ruminiclostridium cellulolyticum (strain ATCC 35319 / DSM 5812 / JCM 6584 / H10) (Clostridium cellulolyticum).